Reading from the N-terminus, the 187-residue chain is Protein GrpE (187 aa).

Residues 1–30 (MEKKETKNETEKTNKQDNKNTKSQKKENLN) form a disordered region.

Belongs to the GrpE family. As to quaternary structure, homodimer.

The protein resides in the cytoplasm. Functionally, participates actively in the response to hyperosmotic and heat shock by preventing the aggregation of stress-denatured proteins, in association with DnaK and GrpE. It is the nucleotide exchange factor for DnaK and may function as a thermosensor. Unfolded proteins bind initially to DnaJ; upon interaction with the DnaJ-bound protein, DnaK hydrolyzes its bound ATP, resulting in the formation of a stable complex. GrpE releases ADP from DnaK; ATP binding to DnaK triggers the release of the substrate protein, thus completing the reaction cycle. Several rounds of ATP-dependent interactions between DnaJ, DnaK and GrpE are required for fully efficient folding. The sequence is that of Protein GrpE from Borreliella afzelii (strain PKo) (Borrelia afzelii).